The chain runs to 185 residues: NAD(P)H-dependent FMN reductase PA1204 (185 aa).

FMN-binding positions include 13 to 20 and 81 to 83; these read SLRSGSYN and YNY. 115–122 provides a ligand contact to NAD(+); that stretch reads SAGRFGTA.

This sequence belongs to the SsuE family. In terms of assembly, homodimer. It depends on FMN as a cofactor.

In terms of biological role, has NAD(P)H-dependent FMN reductase activity. This chain is NAD(P)H-dependent FMN reductase PA1204, found in Pseudomonas aeruginosa (strain ATCC 15692 / DSM 22644 / CIP 104116 / JCM 14847 / LMG 12228 / 1C / PRS 101 / PAO1).